The chain runs to 209 residues: Dehydration-responsive element-binding protein 1F (209 aa).

The Nuclear localization signal motif lies at K14 to R26. Positions V29–A86 form a DNA-binding region, AP2/ERF. The tract at residues F137 to F157 is disordered.

It belongs to the AP2/ERF transcription factor family. ERF subfamily.

The protein resides in the nucleus. Its function is as follows. Transcriptional activator that binds specifically to the DNA sequence 5'-[AG]CCGAC-3'. Binding to the C-repeat/DRE element mediates cold or dehydration-inducible transcription. CBF/DREB1 factors play a key role in freezing tolerance and cold acclimation. The polypeptide is Dehydration-responsive element-binding protein 1F (DREB1F) (Arabidopsis thaliana (Mouse-ear cress)).